Consider the following 154-residue polypeptide: Protein FAM162A (154 aa).

The tract at residues 76–102 is required for proapoptotic activity; that stretch reads RFKKEDEIPETVSLEMLDAAKNKMRVK. A helical membrane pass occupies residues 103 to 120; the sequence is ISYLMIALTVVGCIFMVI.

The protein belongs to the UPF0389 family. Interacts with HSP90AB1; HSP90AB1 is essential for FAM162A mitochondrial localization and pro-apoptotic activity. Interacts with VDAC2; the interaction is probably involved in inducing mitochondrial permeability transition.

The protein resides in the mitochondrion membrane. Proposed to be involved in regulation of apoptosis; the exact mechanism may differ between cell types/tissues. May be involved in hypoxia-induced cell death of transformed cells implicating cytochrome C release and caspase activation (such as CASP9) and inducing mitochondrial permeability transition. May be involved in hypoxia-induced cell death of neuronal cells probably by promoting release of AIFM1 from mitochondria to cytoplasm and its translocation to the nucleus; however, the involvement of caspases has been reported conflictingly. In Homo sapiens (Human), this protein is Protein FAM162A (FAM162A).